The sequence spans 100 residues: Colipase-like protein 2 (100 aa).

The N-terminal stretch at 1–21 (MAAALALVAGVLSGAVLPLWS) is a signal peptide. Disulfide bonds link cysteine 34–cysteine 45, cysteine 40–cysteine 56, cysteine 44–cysteine 78, cysteine 66–cysteine 86, and cysteine 80–cysteine 97.

It belongs to the colipase family.

Its subcellular location is the secreted. The protein is Colipase-like protein 2 (CLPSL2) of Homo sapiens (Human).